Consider the following 207-residue polypeptide: Ribosome maturation factor RimM (207 aa).

A PRC barrel domain is found at 130–207; the sequence is EDEFYWVDLI…RIVVDWGLDY (78 aa).

It belongs to the RimM family. Binds ribosomal protein uS19.

It is found in the cytoplasm. Its function is as follows. An accessory protein needed during the final step in the assembly of 30S ribosomal subunit, possibly for assembly of the head region. Essential for efficient processing of 16S rRNA. May be needed both before and after RbfA during the maturation of 16S rRNA. It has affinity for free ribosomal 30S subunits but not for 70S ribosomes. The polypeptide is Ribosome maturation factor RimM (Cupriavidus taiwanensis (strain DSM 17343 / BCRC 17206 / CCUG 44338 / CIP 107171 / LMG 19424 / R1) (Ralstonia taiwanensis (strain LMG 19424))).